Reading from the N-terminus, the 277-residue chain is Pantothenate synthetase (277 aa).

26 to 33 is a binding site for ATP; it reads MGYLHQGH. The active-site Proton donor is H33. Position 57 (Q57) interacts with (R)-pantoate. Q57 lines the beta-alanine pocket. Residue 143–146 participates in ATP binding; that stretch reads GQKD. Residue Q149 participates in (R)-pantoate binding. Residues V172 and 180-183 contribute to the ATP site; that span reads LSSR.

It belongs to the pantothenate synthetase family. As to quaternary structure, homodimer.

The protein localises to the cytoplasm. The catalysed reaction is (R)-pantoate + beta-alanine + ATP = (R)-pantothenate + AMP + diphosphate + H(+). It functions in the pathway cofactor biosynthesis; (R)-pantothenate biosynthesis; (R)-pantothenate from (R)-pantoate and beta-alanine: step 1/1. Functionally, catalyzes the condensation of pantoate with beta-alanine in an ATP-dependent reaction via a pantoyl-adenylate intermediate. This chain is Pantothenate synthetase, found in Chloroflexus aggregans (strain MD-66 / DSM 9485).